A 206-amino-acid polypeptide reads, in one-letter code: Small ribosomal subunit protein uS4 (206 aa).

The S4 RNA-binding domain occupies 96 to 160 (CRLDNVVYRM…AQLRIVQALE (65 aa)).

It belongs to the universal ribosomal protein uS4 family. In terms of assembly, part of the 30S ribosomal subunit. Contacts protein S5. The interaction surface between S4 and S5 is involved in control of translational fidelity.

In terms of biological role, one of the primary rRNA binding proteins, it binds directly to 16S rRNA where it nucleates assembly of the body of the 30S subunit. With S5 and S12 plays an important role in translational accuracy. The sequence is that of Small ribosomal subunit protein uS4 from Pseudomonas putida (strain GB-1).